A 283-amino-acid chain; its full sequence is Lectin subunit alpha (283 aa).

An N-terminal signal peptide occupies residues 1–23 (MSLTMKNVEGFVIFLVIFTSTAA). A C-type lectin domain is found at 51–159 (HECARHDQQL…NVKMGYICEP (109 aa)). Cystine bridges form between cysteine 53–cysteine 157 and cysteine 132–cysteine 149.

Functionally, role in the defense system of the organism against microorganisms. This lectin binds galactose. This chain is Lectin subunit alpha, found in Sarcophaga peregrina (Flesh fly).